Consider the following 214-residue polypeptide: MIEGLLGRKLGMTQIFDDEGRAIPVTVLEVGPCVVTQVKTSDRDGYQAVQLGFGHRKRQNRPMQGHLRASGASPRYLKEVRVDDATRFQVGQVIDCTIFQPGQLVDVIGWRKGRGFQGGVKRHGFAGGPKTHGQSDRHRAPGSIGPTTDPGRVHKGKRMAGRMGPVRVTVQNLRVERVDPQRNLVLVRGAVPGHPNGLVIVRYAVKQRRAKATA.

The interval 119–159 (GVKRHGFAGGPKTHGQSDRHRAPGSIGPTTDPGRVHKGKRM) is disordered.

The protein belongs to the universal ribosomal protein uL3 family. In terms of assembly, part of the 50S ribosomal subunit. Forms a cluster with proteins L14 and L19.

One of the primary rRNA binding proteins, it binds directly near the 3'-end of the 23S rRNA, where it nucleates assembly of the 50S subunit. The protein is Large ribosomal subunit protein uL3 of Thermomicrobium roseum (strain ATCC 27502 / DSM 5159 / P-2).